The chain runs to 624 residues: Pentatricopeptide repeat-containing protein At2g32630 (624 aa).

13 PPR repeats span residues 153 to 187 (FEKF…GLSI), 188 to 222 (DERS…GVKI), 223 to 257 (TVYS…GIKP), 258 to 292 (EAYT…GVVY), 293 to 327 (NKVT…GIES), 328 to 362 (DVHV…GLSP), 363 to 397 (SSYT…GVNI), 398 to 432 (TQVV…GFQA), 433 to 467 (DVFT…GVKL), 468 to 502 (STVS…GVQP), 503 to 537 (NAIT…GMDP), 538 to 572 (DSYT…GLDQ), and 573 to 607 (NSVT…GYTI).

The protein belongs to the PPR family. P subfamily.

The chain is Pentatricopeptide repeat-containing protein At2g32630 from Arabidopsis thaliana (Mouse-ear cress).